A 318-amino-acid chain; its full sequence is MATLSQKKLMESVRLMEREWVKMHKALVRSRCGEVKEVRYRYVEMIGRGSFGVVVKIMDDRHNFFALKRVYQDRRYHNRELGILMEVDHPNIVRLVSYFHTDKTSSGAYLNIITDFVGMNLEEYIKANRGVETEEIRSVYRQILEGLRYLHEKNICHRDMKPSNILIDTNGLVKICDLGSAKVIKSGERNITYICSRFYRAPENLLDYKEYDFKIDIWSVGCVIAEFRHPGPIFKGDTSGSTLNRILEIVRVTSDDLIGLGCLKPDLKQGVGIRKYLEAFFSDPDLLEVLEKSLAFSPCKRSTASELLRKQFFQQAHE.

Residues tyrosine 40 to phenylalanine 313 enclose the Protein kinase domain. Residues isoleucine 46 to valine 54 and lysine 68 contribute to the ATP site. Aspartate 159 (proton acceptor) is an active-site residue.

Belongs to the protein kinase superfamily. CMGC Ser/Thr protein kinase family. GSK-3 subfamily.

It localises to the cytoplasm. The protein resides in the nucleus. It carries out the reaction L-seryl-[protein] + ATP = O-phospho-L-seryl-[protein] + ADP + H(+). The catalysed reaction is L-threonyl-[protein] + ATP = O-phospho-L-threonyl-[protein] + ADP + H(+). Functionally, may play a role in the initiation and completion of mitosis. The polypeptide is Probable serine/threonine-protein kinase MRK1 homolog (MRK1) (Encephalitozoon cuniculi (strain GB-M1) (Microsporidian parasite)).